Reading from the N-terminus, the 260-residue chain is Phosphatidate cytidylyltransferase (260 aa).

7 consecutive transmembrane segments (helical) span residues I9–F29, M46–L66, A70–L90, F102–L122, L130–F150, F172–F192, and L196–V216.

This sequence belongs to the CDS family.

The protein localises to the cell membrane. It carries out the reaction a 1,2-diacyl-sn-glycero-3-phosphate + CTP + H(+) = a CDP-1,2-diacyl-sn-glycerol + diphosphate. It participates in phospholipid metabolism; CDP-diacylglycerol biosynthesis; CDP-diacylglycerol from sn-glycerol 3-phosphate: step 3/3. This Staphylococcus saprophyticus subsp. saprophyticus (strain ATCC 15305 / DSM 20229 / NCIMB 8711 / NCTC 7292 / S-41) protein is Phosphatidate cytidylyltransferase (cdsA).